We begin with the raw amino-acid sequence, 320 residues long: Phosphate acyltransferase (320 aa).

This sequence belongs to the PlsX family. In terms of assembly, homodimer. Probably interacts with PlsY.

Its subcellular location is the cytoplasm. It carries out the reaction a fatty acyl-[ACP] + phosphate = an acyl phosphate + holo-[ACP]. Its pathway is lipid metabolism; phospholipid metabolism. Catalyzes the reversible formation of acyl-phosphate (acyl-PO(4)) from acyl-[acyl-carrier-protein] (acyl-ACP). This enzyme utilizes acyl-ACP as fatty acyl donor, but not acyl-CoA. This Chlamydia pneumoniae (Chlamydophila pneumoniae) protein is Phosphate acyltransferase.